The primary structure comprises 301 residues: UDP-N-acetylenolpyruvoylglucosamine reductase 1 (301 aa).

Positions 29–196 (KIGGPADILI…LEAEFQLQIG (168 aa)) constitute an FAD-binding PCMH-type domain. Arginine 174 is an active-site residue. Serine 225 acts as the Proton donor in catalysis. Residue glutamate 295 is part of the active site.

It belongs to the MurB family. Requires FAD as cofactor.

Its subcellular location is the cytoplasm. It catalyses the reaction UDP-N-acetyl-alpha-D-muramate + NADP(+) = UDP-N-acetyl-3-O-(1-carboxyvinyl)-alpha-D-glucosamine + NADPH + H(+). It functions in the pathway cell wall biogenesis; peptidoglycan biosynthesis. Its function is as follows. Cell wall formation. The protein is UDP-N-acetylenolpyruvoylglucosamine reductase 1 (murB1) of Bacillus anthracis.